We begin with the raw amino-acid sequence, 417 residues long: Tyrosine--tRNA ligase (417 aa).

Position 39 (Y39) interacts with L-tyrosine. The short motif at 44–53 is the 'HIGH' region element; sequence PTAPSLHAGG. Residues Y176 and Q180 each coordinate L-tyrosine. Positions 236–240 match the 'KMSKS' region motif; the sequence is KMGKS. K239 is an ATP binding site. Residues 350–417 enclose the S4 RNA-binding domain; it reads IGVLALMVLA…KKRHVLIRPA (68 aa).

Belongs to the class-I aminoacyl-tRNA synthetase family. TyrS type 1 subfamily. As to quaternary structure, homodimer.

The protein localises to the cytoplasm. The enzyme catalyses tRNA(Tyr) + L-tyrosine + ATP = L-tyrosyl-tRNA(Tyr) + AMP + diphosphate + H(+). Its function is as follows. Catalyzes the attachment of tyrosine to tRNA(Tyr) in a two-step reaction: tyrosine is first activated by ATP to form Tyr-AMP and then transferred to the acceptor end of tRNA(Tyr). This Brucella suis biovar 1 (strain 1330) protein is Tyrosine--tRNA ligase.